We begin with the raw amino-acid sequence, 377 residues long: Glutamate 5-kinase (377 aa).

Lys-15 contacts ATP. Ser-56, Asp-143, and Asn-155 together coordinate substrate. An ATP-binding site is contributed by 175–176 (SD). In terms of domain architecture, PUA spans 281–358 (KGTLTIDAGA…PDVLIILGIS (78 aa)).

This sequence belongs to the glutamate 5-kinase family.

The protein localises to the cytoplasm. The enzyme catalyses L-glutamate + ATP = L-glutamyl 5-phosphate + ADP. It participates in amino-acid biosynthesis; L-proline biosynthesis; L-glutamate 5-semialdehyde from L-glutamate: step 1/2. Catalyzes the transfer of a phosphate group to glutamate to form L-glutamate 5-phosphate. This Rhodopseudomonas palustris (strain BisA53) protein is Glutamate 5-kinase.